Here is a 56-residue protein sequence, read N- to C-terminus: Large ribosomal subunit protein bL32 (56 aa).

The tract at residues 1-37 (MAVQQNKKSRSKRGMRRSHDALSTAQLSVDATSGELH) is disordered. Residues 7–16 (KKSRSKRGMR) are compositionally biased toward basic residues. The segment covering 21 to 31 (ALSTAQLSVDA) has biased composition (polar residues).

It belongs to the bacterial ribosomal protein bL32 family.

The protein is Large ribosomal subunit protein bL32 of Shewanella loihica (strain ATCC BAA-1088 / PV-4).